The sequence spans 117 residues: Large ribosomal subunit protein uL18 (117 aa).

It belongs to the universal ribosomal protein uL18 family. In terms of assembly, part of the 50S ribosomal subunit; part of the 5S rRNA/L5/L18/L25 subcomplex. Contacts the 5S and 23S rRNAs.

In terms of biological role, this is one of the proteins that bind and probably mediate the attachment of the 5S RNA into the large ribosomal subunit, where it forms part of the central protuberance. In Sodalis glossinidius (strain morsitans), this protein is Large ribosomal subunit protein uL18.